The chain runs to 261 residues: Cytochrome c oxidase subunit 3 (261 aa).

The Mitochondrial matrix portion of the chain corresponds to 1–15; it reads MAHQAHAYHMVDPSP. The chain crosses the membrane as a helical span at residues 16 to 34; sequence WPLTGAIAALLMTSGLAIW. Over 35–40 the chain is Mitochondrial intermembrane; sequence FHFHST. Residues 41-66 form a helical membrane-spanning segment; that stretch reads TLMTLGLILLLLTMYQWWRDIIREGT. Topologically, residues 67 to 72 are mitochondrial matrix; it reads FQGHHT. The helical transmembrane segment at 73–105 threads the bilayer; the sequence is PPVQKGLRYGMILFITSEVFFFLGFFWAFYHSS. Topologically, residues 106–128 are mitochondrial intermembrane; it reads LAPTPELGGCWPPTGITPLDPFE. The helical transmembrane segment at 129 to 152 threads the bilayer; sequence VPLLNTAVLLASGVTVTWAHHSIM. Topologically, residues 153–155 are mitochondrial matrix; sequence EGE. Residues 156–183 traverse the membrane as a helical segment; that stretch reads RKQAIQSLALTILLGLYFTALQAMEYYE. Over 184–190 the chain is Mitochondrial intermembrane; it reads APFTIAD. The helical transmembrane segment at 191–223 threads the bilayer; it reads GVYGSTFFVATGFHGLHVIIGSTFLAVCLLRQI. At 224-232 the chain is on the mitochondrial matrix side; the sequence is QYHFTSEHH. Residues 233–256 form a helical membrane-spanning segment; sequence FGFEAAAWYWHFVDVVWLFLYVSI. Residues 257 to 261 are Mitochondrial intermembrane-facing; that stretch reads YWWGS.

The protein belongs to the cytochrome c oxidase subunit 3 family. As to quaternary structure, component of the cytochrome c oxidase (complex IV, CIV), a multisubunit enzyme composed of 14 subunits. The complex is composed of a catalytic core of 3 subunits MT-CO1, MT-CO2 and MT-CO3, encoded in the mitochondrial DNA, and 11 supernumerary subunits COX4I, COX5A, COX5B, COX6A, COX6B, COX6C, COX7A, COX7B, COX7C, COX8 and NDUFA4, which are encoded in the nuclear genome. The complex exists as a monomer or a dimer and forms supercomplexes (SCs) in the inner mitochondrial membrane with NADH-ubiquinone oxidoreductase (complex I, CI) and ubiquinol-cytochrome c oxidoreductase (cytochrome b-c1 complex, complex III, CIII), resulting in different assemblies (supercomplex SCI(1)III(2)IV(1) and megacomplex MCI(2)III(2)IV(2)).

It is found in the mitochondrion inner membrane. It catalyses the reaction 4 Fe(II)-[cytochrome c] + O2 + 8 H(+)(in) = 4 Fe(III)-[cytochrome c] + 2 H2O + 4 H(+)(out). In terms of biological role, component of the cytochrome c oxidase, the last enzyme in the mitochondrial electron transport chain which drives oxidative phosphorylation. The respiratory chain contains 3 multisubunit complexes succinate dehydrogenase (complex II, CII), ubiquinol-cytochrome c oxidoreductase (cytochrome b-c1 complex, complex III, CIII) and cytochrome c oxidase (complex IV, CIV), that cooperate to transfer electrons derived from NADH and succinate to molecular oxygen, creating an electrochemical gradient over the inner membrane that drives transmembrane transport and the ATP synthase. Cytochrome c oxidase is the component of the respiratory chain that catalyzes the reduction of oxygen to water. Electrons originating from reduced cytochrome c in the intermembrane space (IMS) are transferred via the dinuclear copper A center (CU(A)) of subunit 2 and heme A of subunit 1 to the active site in subunit 1, a binuclear center (BNC) formed by heme A3 and copper B (CU(B)). The BNC reduces molecular oxygen to 2 water molecules using 4 electrons from cytochrome c in the IMS and 4 protons from the mitochondrial matrix. This is Cytochrome c oxidase subunit 3 (mt-co3) from Cyprinus carpio (Common carp).